Consider the following 186-residue polypeptide: Adenylate kinase (186 aa).

14 to 19 (GAGKGT) contacts ATP. An NMP region spans residues 34–63 (STGDILRDHVARGTPLGERVRPIMERGDLV). Residues Thr-35, Arg-40, 61-63 (DLV), 84-87 (GFPR), and Gln-91 contribute to the AMP site. The interval 125–135 (RRAELEGRSDD) is LID. Residue Arg-126 participates in ATP binding. AMP is bound by residues Arg-132 and Arg-143. Gly-171 contacts ATP.

This sequence belongs to the adenylate kinase family. In terms of assembly, monomer.

It localises to the cytoplasm. The enzyme catalyses AMP + ATP = 2 ADP. Its pathway is purine metabolism; AMP biosynthesis via salvage pathway; AMP from ADP: step 1/1. Functionally, catalyzes the reversible transfer of the terminal phosphate group between ATP and AMP. Plays an important role in cellular energy homeostasis and in adenine nucleotide metabolism. In Thermus thermophilus (strain ATCC BAA-163 / DSM 7039 / HB27), this protein is Adenylate kinase.